A 669-amino-acid polypeptide reads, in one-letter code: Cysteine-rich receptor-like protein kinase 34 (669 aa).

Residues M1–A23 form the signal peptide. 2 consecutive Gnk2-homologous domains span residues Q24–F123 and E133–Y246. The Extracellular segment spans residues Q24–G285. Residues N35, N52, N103, N120, N147, N172, N252, and N280 are each glycosylated (N-linked (GlcNAc...) asparagine). The helical transmembrane segment at I286–V306 threads the bilayer. Residues V307–R669 are Cytoplasmic-facing. A Protein kinase domain is found at F345–L624. Residues I351–V359 and K373 each bind ATP. Y418 bears the Phosphotyrosine mark. D470 (proton acceptor) is an active-site residue. S474 is modified (phosphoserine). Residue T510 is modified to Phosphothreonine. Y518 carries the phosphotyrosine modification.

This sequence belongs to the protein kinase superfamily. Ser/Thr protein kinase family. CRK subfamily.

Its subcellular location is the membrane. It carries out the reaction L-seryl-[protein] + ATP = O-phospho-L-seryl-[protein] + ADP + H(+). The catalysed reaction is L-threonyl-[protein] + ATP = O-phospho-L-threonyl-[protein] + ADP + H(+). In Arabidopsis thaliana (Mouse-ear cress), this protein is Cysteine-rich receptor-like protein kinase 34.